A 719-amino-acid chain; its full sequence is MIYGYTEKELEKTDPDGWRLIVEDTGRQRWKYLKTEEERRERPQTYMEKYFLGKNMDLPEQPAAKTPIESARKGFSFYKHLQTSDGNWACEYGGVMFLLPGLIIAMYISKIEFPDEMRIEVIRYLVNHANPEDGGWGIHIEGKSTVFGTALNYVVLRILGLGPDHPVTMKARIRLNELGGAIGCPQWGKFWLAVLNCYGWEGINPILPEFWMLPEWLPIHPSRWWVHTRAVYLPMGYIYGEKFTAPVDPLIESLREELYTQPYSSINFSKHRNTTSPVDVYVPHTRFLRVINSILTFYHTIFRFSWIKDMASKYAYKLIEYENKNTDFLCIGPVNFSIHILAVYWKEGPDSYAFKSHKERMADFLWISKKGMMMNGTNGVQLWDTSFAVQALVESGLAEDPEFKDHMIKALDFLDKCQIQKNCDDQQKCYRHRRKGAWPFSTRQQGYTVSDCTAEALKAVLLLQNLKSFPKRVSYDRLKDSVDVILSLQNKDGGFASYELIRGPSWLEFINPAEVFGDIMIEHSYPECTTAAVTALCYFRSLCSHYRGPEINKSVKNAIQFIKESQRPDGSWYESWAICFTYATMFALESLSCVKDFYENSFHSRRACDFLVNKQEEDGGWSEGYQSCTDGIWTRHPTGSQVVQTAWACIGLMYANYPDETPIKRGINLIMSRQQPNGEWKQEAIEGVFNKNCMISYPNYKFNFTIKALGMYSKRYGNI.

The stretch at 118–160 (RIEVIRYLVNHANPEDGGWGIHIEGKSTVFGTALNYVVLRILG) is one PFTB 1 repeat. Asp451 serves as the catalytic Proton donor. PFTB repeat units follow at residues 478 to 523 (LKDS…MIEH), 555 to 595 (VKNA…SCVK), and 604 to 645 (SRRA…VVQT).

Belongs to the terpene cyclase/mutase family.

The catalysed reaction is (S)-2,3-epoxysqualene = lanosterol. Its pathway is terpene metabolism; lanosterol biosynthesis; lanosterol from farnesyl diphosphate: step 3/3. Functionally, catalyzes the cyclization of (S)-2,3 oxidosqualene to lanosterol, a reaction that forms the sterol nucleus. The chain is Lanosterol synthase (ERG7) from Pneumocystis carinii.